The following is a 126-amino-acid chain: Protein translocase subunit SecE (126 aa).

The next 3 helical transmembrane spans lie at 18–38 (LKWV…YLYG), 40–60 (LSVV…LGVA), and 97–117 (IVLA…GIMV).

The protein belongs to the SecE/SEC61-gamma family. As to quaternary structure, component of the Sec protein translocase complex. Heterotrimer consisting of SecY, SecE and SecG subunits. The heterotrimers can form oligomers, although 1 heterotrimer is thought to be able to translocate proteins. Interacts with the ribosome. Interacts with SecDF, and other proteins may be involved. Interacts with SecA.

The protein resides in the cell inner membrane. Its function is as follows. Essential subunit of the Sec protein translocation channel SecYEG. Clamps together the 2 halves of SecY. May contact the channel plug during translocation. In Vibrio cholerae serotype O1 (strain ATCC 39315 / El Tor Inaba N16961), this protein is Protein translocase subunit SecE.